The chain runs to 408 residues: tRNA(Met) cytidine acetate ligase (408 aa).

ATP is bound by residues 7–20, glycine 102, asparagine 170, and 195–196; these read IVEY…HKYH and RI.

Belongs to the TmcAL family.

The protein resides in the cytoplasm. The enzyme catalyses cytidine(34) in elongator tRNA(Met) + acetate + ATP = N(4)-acetylcytidine(34) in elongator tRNA(Met) + AMP + diphosphate. In terms of biological role, catalyzes the formation of N(4)-acetylcytidine (ac(4)C) at the wobble position of elongator tRNA(Met), using acetate and ATP as substrates. First activates an acetate ion to form acetyladenylate (Ac-AMP) and then transfers the acetyl group to tRNA to form ac(4)C34. This is tRNA(Met) cytidine acetate ligase from Clostridium kluyveri (strain NBRC 12016).